Consider the following 942-residue polypeptide: Ubiquitin carboxyl-terminal hydrolase 33 (942 aa).

The segment at 37–140 (NHCPHLDSVG…PSLPHVRQPH (104 aa)) adopts a UBP-type zinc-finger fold. Zn(2+) is bound by residues Cys39, His41, Cys61, Cys64, Cys74, Cys79, Cys84, His91, His95, His101, Cys114, and Cys117. The region spanning 185-715 (TGLKNIGNTC…EAYVLFYRKS (531 aa)) is the USP domain. Cys194 functions as the Nucleophile in the catalytic mechanism. A disordered region spans residues 294-357 (VEEDPQTITT…MLIQDDENNS (64 aa)). The segment covering 315-327 (DVDFQSCESCSNS) has biased composition (polar residues). At Ser377 the chain carries Phosphoserine. A compositionally biased stretch (polar residues) spans 419-431 (DLSTPQILPSNEG). Residues 419–469 (DLSTPQILPSNEGVNPRLSASPPKSGNLWPGLAPPHKKAQSASPKRKKQHK) form a disordered region. Position 439 is a phosphoserine (Ser439). Residues 453 to 469 (PHKKAQSASPKRKKQHK) show a composition bias toward basic residues. The active-site Proton acceptor is the His673. DUSP domains lie at 717 to 810 (EEAQ…LYIC) and 818 to 921 (EKIE…RPPV).

This sequence belongs to the peptidase C19 family. USP20/USP33 subfamily. Interacts with VHL, leading to its ubiquitination and subsequent degradation. Interacts with ARRB1 and ARRB2. Interacts with ADRB2. Interacts with DIO2. Interacts with ROBO1. Interacts with SELENBP1; in a selenium-dependent manner. Interacts with CCP110. Post-translationally, ubiquitinated via a VHL-dependent pathway for proteasomal degradation. As to expression, widely expressed.

It is found in the cytoplasm. It localises to the perinuclear region. The protein resides in the cytoskeleton. Its subcellular location is the microtubule organizing center. The protein localises to the centrosome. It is found in the golgi apparatus. It carries out the reaction Thiol-dependent hydrolysis of ester, thioester, amide, peptide and isopeptide bonds formed by the C-terminal Gly of ubiquitin (a 76-residue protein attached to proteins as an intracellular targeting signal).. Deubiquitinating enzyme involved in various processes such as centrosome duplication, cellular migration and beta-2 adrenergic receptor/ADRB2 recycling. Involved in regulation of centrosome duplication by mediating deubiquitination of CCP110 in S and G2/M phase, leading to stabilize CCP110 during the period which centrioles duplicate and elongate. Involved in cell migration via its interaction with intracellular domain of ROBO1, leading to regulate the Slit signaling. Plays a role in commissural axon guidance cross the ventral midline of the neural tube in a Slit-dependent manner, possibly by mediating the deubiquitination of ROBO1. Acts as a regulator of G-protein coupled receptor (GPCR) signaling by mediating the deubiquitination of beta-arrestins (ARRB1 and ARRB2) and beta-2 adrenergic receptor (ADRB2). Plays a central role in ADRB2 recycling and resensitization after prolonged agonist stimulation by constitutively binding ADRB2, mediating deubiquitination of ADRB2 and inhibiting lysosomal trafficking of ADRB2. Upon dissociation, it is probably transferred to the translocated beta-arrestins, leading to beta-arrestins deubiquitination and disengagement from ADRB2. This suggests the existence of a dynamic exchange between the ADRB2 and beta-arrestins. Deubiquitinates DIO2, thereby regulating thyroid hormone regulation. Mediates deubiquitination of both 'Lys-48'- and 'Lys-63'-linked polyubiquitin chains. The protein is Ubiquitin carboxyl-terminal hydrolase 33 (USP33) of Homo sapiens (Human).